The following is a 224-amino-acid chain: Triosephosphate isomerase (224 aa).

Substrate is bound at residue 9 to 11 (NFK). His93 acts as the Electrophile in catalysis. The active-site Proton acceptor is the Glu141. Substrate-binding positions include Ile146, Gly181, and 202-203 (AS).

It belongs to the triosephosphate isomerase family. As to quaternary structure, homotetramer; dimer of dimers.

Its subcellular location is the cytoplasm. It catalyses the reaction D-glyceraldehyde 3-phosphate = dihydroxyacetone phosphate. The protein operates within carbohydrate biosynthesis; gluconeogenesis. It participates in carbohydrate degradation; glycolysis; D-glyceraldehyde 3-phosphate from glycerone phosphate: step 1/1. Involved in the gluconeogenesis. Catalyzes stereospecifically the conversion of dihydroxyacetone phosphate (DHAP) to D-glyceraldehyde-3-phosphate (G3P). This Pyrobaculum arsenaticum (strain DSM 13514 / JCM 11321 / PZ6) protein is Triosephosphate isomerase.